A 295-amino-acid chain; its full sequence is Tetrahydromethanopterin S-methyltransferase subunit E (295 aa).

7 consecutive transmembrane segments (helical) span residues methionine 4–alanine 24, glycine 60–methionine 80, valine 87–valine 107, glycine 140–glycine 160, phenylalanine 161–isoleucine 181, tyrosine 234–threonine 254, and isoleucine 255–isoleucine 275.

This sequence belongs to the MtrE family. The complex is composed of 8 subunits; MtrA, MtrB, MtrC, MtrD, MtrE, MtrF, MtrG and MtrH.

The protein resides in the cell membrane. It catalyses the reaction 5-methyl-5,6,7,8-tetrahydromethanopterin + coenzyme M + 2 Na(+)(in) = 5,6,7,8-tetrahydromethanopterin + methyl-coenzyme M + 2 Na(+)(out). Its pathway is one-carbon metabolism; methanogenesis from CO(2); methyl-coenzyme M from 5,10-methylene-5,6,7,8-tetrahydromethanopterin: step 2/2. Part of a complex that catalyzes the formation of methyl-coenzyme M and tetrahydromethanopterin from coenzyme M and methyl-tetrahydromethanopterin. This is an energy-conserving, sodium-ion translocating step. In Methanothermobacter thermautotrophicus (strain ATCC 29096 / DSM 1053 / JCM 10044 / NBRC 100330 / Delta H) (Methanobacterium thermoautotrophicum), this protein is Tetrahydromethanopterin S-methyltransferase subunit E (mtrE).